The following is a 226-amino-acid chain: PKHD-type hydroxylase Abu_0724 (226 aa).

A Fe2OG dioxygenase domain is found at 78–178; that stretch reads HIISPFFNKY…RMVSFMWIQS (101 aa). Residues H96, D98, and H159 each contribute to the Fe cation site. R169 contributes to the 2-oxoglutarate binding site.

Fe(2+) serves as cofactor. It depends on L-ascorbate as a cofactor.

The polypeptide is PKHD-type hydroxylase Abu_0724 (Aliarcobacter butzleri (strain RM4018) (Arcobacter butzleri)).